Consider the following 164-residue polypeptide: MFKNTFQSGFLSILYSIGSKPLQIWDKKVRNGHIKRITDNDIQSLVLEIEGTNVSTTYITCPADPKKTLGIKLPFLVMIIKNLKKYFTFEVQVLDDKNVRRRFRASNYQSTTRVKPFICTMPMRLDDGWNQIQFNLSDFTRRAYDPCKLSYPKGLLLRQTLLRG.

This sequence belongs to the CFAP20 family. In terms of assembly, microtubule inner protein component of sperm flagellar doublet microtubules.

It is found in the nucleus. It localises to the cytoplasm. Its subcellular location is the cytoskeleton. The protein localises to the microtubule organizing center. The protein resides in the centrosome. It is found in the centriole. It localises to the cilium basal body. Its subcellular location is the cilium axoneme. The protein localises to the flagellum axoneme. In terms of biological role, cilium- and flagellum-specific protein that plays a role in axonemal structure organization and motility. Microtubule inner protein (MIP) part of the dynein-decorated doublet microtubules (DMTs) in cilia axoneme, which is required for motile cilia beating. Involved in the regulation of the size and morphology of cilia. Required for axonemal microtubules polyglutamylation. This chain is Cilia- and flagella-associated protein 20 (Cfap20), found in Rattus norvegicus (Rat).